A 203-amino-acid chain; its full sequence is Recombination protein RecR (203 aa).

The C4-type zinc-finger motif lies at 56-71 (CSVCGNVSDEERCRIC). In terms of domain architecture, Toprim spans 79–179 (SLVCVVEEPK…TVTRIASGLP (101 aa)).

This sequence belongs to the RecR family.

May play a role in DNA repair. It seems to be involved in an RecBC-independent recombinational process of DNA repair. It may act with RecF and RecO. The sequence is that of Recombination protein RecR from Mycolicibacterium smegmatis (strain ATCC 700084 / mc(2)155) (Mycobacterium smegmatis).